Reading from the N-terminus, the 375-residue chain is Cobalt-precorrin-5B C(1)-methyltransferase (375 aa).

It belongs to the CbiD family.

The catalysed reaction is Co-precorrin-5B + S-adenosyl-L-methionine = Co-precorrin-6A + S-adenosyl-L-homocysteine. It functions in the pathway cofactor biosynthesis; adenosylcobalamin biosynthesis; cob(II)yrinate a,c-diamide from sirohydrochlorin (anaerobic route): step 6/10. Catalyzes the methylation of C-1 in cobalt-precorrin-5B to form cobalt-precorrin-6A. The polypeptide is Cobalt-precorrin-5B C(1)-methyltransferase (Paracidovorax citrulli (strain AAC00-1) (Acidovorax citrulli)).